Here is a 273-residue protein sequence, read N- to C-terminus: MRAALRLLATATATVRPSARFLKPGSPTGLTGLGTHPSPRSALLYLYNHTLDKLKQIPEHSLYRQSAEALTKHRLAIVEQYVPDGYDAWQERARKLLEKHKSDLTARQFDGQHARLVEGPDGRAYFIRQMVPPQDWRDVEWDGAVLDPHFSWVQTGEDVVGAVKLEDSDKLLELDKIRESDPVAYRQGLRDLGIKMGGVVEDKSPVEWESEPPLSAEQIAEMEARIGSGLIEEVVQVAEGELKLVDIMTQARPWEALEEEAPEGQWTYFERKE.

The N-terminal 8 residues, 1–8 (MRAALRLL), are a transit peptide targeting the mitochondrion.

This sequence belongs to the complex I NDUFA5 subunit family. Complex I is composed of about 40 different subunits.

It is found in the mitochondrion inner membrane. Its function is as follows. Accessory subunit of the mitochondrial membrane respiratory chain NADH dehydrogenase (Complex I), that is believed not to be involved in catalysis. Complex I functions in the transfer of electrons from NADH to the respiratory chain. The immediate electron acceptor for the enzyme is believed to be ubiquinone. This is NADH-ubiquinone oxidoreductase 29.9 kDa subunit, mitochondrial (nuo-32) from Neurospora crassa (strain ATCC 24698 / 74-OR23-1A / CBS 708.71 / DSM 1257 / FGSC 987).